Reading from the N-terminus, the 277-residue chain is Ribosomal RNA small subunit methyltransferase A (277 aa).

Residues asparagine 23, leucine 25, glycine 50, glutamate 75, aspartate 98, and asparagine 121 each coordinate S-adenosyl-L-methionine.

It belongs to the class I-like SAM-binding methyltransferase superfamily. rRNA adenine N(6)-methyltransferase family. RsmA subfamily.

The protein resides in the cytoplasm. It carries out the reaction adenosine(1518)/adenosine(1519) in 16S rRNA + 4 S-adenosyl-L-methionine = N(6)-dimethyladenosine(1518)/N(6)-dimethyladenosine(1519) in 16S rRNA + 4 S-adenosyl-L-homocysteine + 4 H(+). Functionally, specifically dimethylates two adjacent adenosines (A1518 and A1519) in the loop of a conserved hairpin near the 3'-end of 16S rRNA in the 30S particle. May play a critical role in biogenesis of 30S subunits. The polypeptide is Ribosomal RNA small subunit methyltransferase A (Paraburkholderia xenovorans (strain LB400)).